Reading from the N-terminus, the 416-residue chain is Phosphoglycerate kinase (416 aa).

Residues Val-23, Asp-24, Phe-25, Asn-26, Gln-38, Arg-39, Ser-62, His-63, Gly-65, Arg-66, Leu-121, Arg-122, His-168, and Arg-169 each coordinate (2R)-3-phosphoglycerate. Gly-212 is an ADP binding site. Gly-212 contributes to the CDP binding site. AMP is bound by residues Ala-213 and Lys-214. ATP is bound at residue Ala-213. Residue Ala-213 coordinates Mg(2+). CDP is bound at residue Asp-217. Asp-217 is a Mg(2+) binding site. Lys-218 provides a ligand contact to AMP. Lys-218 contacts ATP. Gly-236 contacts ADP. Gly-236 provides a ligand contact to CDP. Residues Gly-237 and Gly-311 each contribute to the AMP site. Gly-237 and Gly-311 together coordinate ATP. Gly-336 and Phe-341 together coordinate CDP. Residue Phe-341 participates in ADP binding. Glu-342 is an AMP binding site. 3 residues coordinate ATP: Glu-342, Asp-373, and Thr-374. Asp-373 lines the Mg(2+) pocket.

It belongs to the phosphoglycerate kinase family. As to quaternary structure, monomer. Mg(2+) serves as cofactor.

The protein resides in the cytoplasm. Its subcellular location is the mitochondrion. The catalysed reaction is (2R)-3-phosphoglycerate + ATP = (2R)-3-phospho-glyceroyl phosphate + ADP. Its pathway is carbohydrate degradation; glycolysis; pyruvate from D-glyceraldehyde 3-phosphate: step 2/5. Catalyzes one of the two ATP producing reactions in the glycolytic pathway via the reversible conversion of 1,3-diphosphoglycerate to 3-phosphoglycerate. Both L- and D- forms of purine and pyrimidine nucleotides can be used as substrates, but the activity is much lower on pyrimidines. Negatively regulates the biosynthesis of acetyl-CoA from pyruvate in the mitochondrion. This is Phosphoglycerate kinase (PGK1) from Debaryomyces hansenii (strain ATCC 36239 / CBS 767 / BCRC 21394 / JCM 1990 / NBRC 0083 / IGC 2968) (Yeast).